The chain runs to 600 residues: DDB1- and CUL4-associated factor 15 (600 aa).

The disordered stretch occupies residues M1–V29. Over residues G14 to R27 the composition is skewed to gly residues. S50 is subject to Phosphoserine. The Zn(2+) site is built by C193, C196, C211, and H214. S314 carries the post-translational modification Phosphoserine. Basic and acidic residues predominate over residues A334–R343. A disordered region spans residues A334–P384. 2 stretches are compositionally biased toward low complexity: residues L344 to L359 and P374 to P384.

Component of the DCX(DCAF15) complex, also named CLR4(DCAF15) complex, composed of DCAF15, DDB1, cullin-4 (CUL4A or CUL4B), DDA1 and RBX1.

It functions in the pathway protein modification; protein ubiquitination. Substrate-recognition component of the DCX(DCAF15) complex, a cullin-4-RING E3 ubiquitin-protein ligase complex that mediates ubiquitination and degradation of target proteins. The DCX(DCAF15) complex acts as a regulator of the natural killer (NK) cells effector functions, possibly by mediating ubiquitination and degradation of cohesin subunits SMC1A and SMC3. May play a role in the activation of antigen-presenting cells (APC) and their interaction with NK cells. This chain is DDB1- and CUL4-associated factor 15, found in Mus musculus (Mouse).